Consider the following 521-residue polypeptide: Insulinoma-associated protein 1 (521 aa).

Residues 1-12 (MPRGFLVKRSKK) show a composition bias toward basic residues. An SNAG domain region spans residues 1–20 (MPRGFLVKRSKKSTPVSYRV). 3 disordered regions span residues 1-59 (MPRG…PPAL), 76-107 (GPPP…PTRP), and 180-230 (AEAA…KPKA). The required and sufficient for interaction with KDM1A stretch occupies residues 2-7 (PRGFLV). The segment at 43–56 (PPVPSPGPLPPPPP) is necessary for interaction with CCND1. Pro residues-rich tracts occupy residues 43-58 (PPVP…PPPA) and 76-85 (GPPPPPPPGP). Low complexity predominate over residues 209–223 (AAVATEPPAKAAKAP). The segment at 272-292 (FICQLCKEEYADPFALAQHKC) adopts a C2H2-type 1; atypical zinc-finger fold. The segment at 300 to 322 (YRCPECAKVFSCPANLASHRRWH) adopts a C2H2-type 2 zinc-finger fold. The tract at residues 320–369 (RWHKPRPVPAAARAPEPEAATRAEAREAAGGGSSDRDTPSPGGVSESGSE) is disordered. Positions 334–346 (PEPEAATRAEARE) are enriched in basic and acidic residues. The C2H2-type 3 zinc-finger motif lies at 373–395 (YECHHCAKKFRRQAYLRKHLLAH). The segment at 398–419 (ALQAKGAPPPPPPPPPPAEDIL) is disordered. Pro residues predominate over residues 404–415 (APPPPPPPPPPA). 2 consecutive C2H2-type zinc fingers follow at residues 452-475 (HLCP…RLLH) and 480-503 (FPCK…NKCH).

The protein belongs to the INSM1 family. As to quaternary structure, interacts (via the N-terminal region) with CCND1 (via cyclin N-terminal domain); the interaction competes with the binding of CCND1 to CDK4 during cell cycle progression and increases its transcriptional repressor activity. Interacts with HDAC3; the interaction increases its transcriptional repressor activity. Interacts (via the SNAG domain) with HDAC1. Interacts (via the SNAG domain) with HDAC2. Interacts (via the SNAG domain) with KDM1A. Interacts (via the SNAG domain) with RCOR1. Interacts with SORBS1. As to expression, expressed in adrenal gland. Expressed in the dentate gyrus of the hippocampus and the wall of the lateral ventricle. Expressed in pancreatic and intestinal endocrine cells.

The protein localises to the nucleus. Functionally, sequence-specific DNA-binding transcriptional regulator that plays a key role in neurogenesis and neuroendocrine cell differentiation during embryonic and/or fetal development. Binds to the consensus sequence 5'-[TG][TC][TC][TT][GA]GGG[CG]A-3' in target promoters. Acts as a transcriptional repressor of NEUROD1 and INS expression via its interaction with cyclin CCND1 in a cell cycle-independent manner. Negatively regulates skeletal muscle-specific gene expression in endocrine cells of the pituitary by inhibiting the Notch signaling pathway. Represses target gene transcription by recruiting chromatin-modifying factors, such as HDAC1, HDAC2, HDAC3, KDM1A and RCOR1 histone deacetylases. Binds to its own promoter, suggesting autoregulation as a self-control feedback mechanism. Competes with histone H3 for the same binding site on the histone demethylase complex formed by KDM1A and RCOR1, and thereby inhibits demethylation of histone H3 at 'Lys-4'. Promotes the generation and expansion of neuronal basal progenitor cells in the developing neocortex. Involved in the differentiation of endocrine cells of the developing anterior pituitary gland, of the pancreas and intestine, and of sympatho-adrenal cells in the peripheral nervous system. Promotes cell cycle signaling arrest and inhibition of cellular proliferation. This chain is Insulinoma-associated protein 1 (Insm1), found in Mus musculus (Mouse).